The primary structure comprises 197 residues: Fe/S biogenesis protein NfuA (197 aa).

Residues Cys155 and Cys158 each contribute to the [4Fe-4S] cluster site.

It belongs to the NfuA family. In terms of assembly, homodimer. [4Fe-4S] cluster serves as cofactor.

In terms of biological role, involved in iron-sulfur cluster biogenesis. Binds a 4Fe-4S cluster, can transfer this cluster to apoproteins, and thereby intervenes in the maturation of Fe/S proteins. Could also act as a scaffold/chaperone for damaged Fe/S proteins. The chain is Fe/S biogenesis protein NfuA from Pseudomonas syringae pv. syringae (strain B728a).